We begin with the raw amino-acid sequence, 77 residues long: ATP synthase subunit c (77 aa).

2 helical membrane-spanning segments follow: residues 13-33 (IATV…GIVA) and 55-75 (FLGI…YFIF).

This sequence belongs to the ATPase C chain family. As to quaternary structure, F-type ATPases have 2 components, F(1) - the catalytic core - and F(0) - the membrane proton channel. F(1) has five subunits: alpha(3), beta(3), gamma(1), delta(1), epsilon(1). F(0) has three main subunits: a(1), b(2) and c(10-14). The alpha and beta chains form an alternating ring which encloses part of the gamma chain. F(1) is attached to F(0) by a central stalk formed by the gamma and epsilon chains, while a peripheral stalk is formed by the delta and b chains.

It is found in the cell membrane. Functionally, f(1)F(0) ATP synthase produces ATP from ADP in the presence of a proton or sodium gradient. F-type ATPases consist of two structural domains, F(1) containing the extramembraneous catalytic core and F(0) containing the membrane proton channel, linked together by a central stalk and a peripheral stalk. During catalysis, ATP synthesis in the catalytic domain of F(1) is coupled via a rotary mechanism of the central stalk subunits to proton translocation. In terms of biological role, key component of the F(0) channel; it plays a direct role in translocation across the membrane. A homomeric c-ring of between 10-14 subunits forms the central stalk rotor element with the F(1) delta and epsilon subunits. The polypeptide is ATP synthase subunit c (Clavibacter sepedonicus (Clavibacter michiganensis subsp. sepedonicus)).